The chain runs to 511 residues: 2-isopropylmalate synthase (511 aa).

The Pyruvate carboxyltransferase domain maps to 6-269 (IIIFDTTLRD…YTDIKCENIF (264 aa)). The Mn(2+) site is built by Asp-15, His-203, His-205, and Asn-239. The tract at residues 394–511 (VIEKLSVISG…SLKVEERKMA (118 aa)) is regulatory domain.

This sequence belongs to the alpha-IPM synthase/homocitrate synthase family. LeuA type 1 subfamily. As to quaternary structure, homodimer. The cofactor is Mn(2+).

Its subcellular location is the cytoplasm. It carries out the reaction 3-methyl-2-oxobutanoate + acetyl-CoA + H2O = (2S)-2-isopropylmalate + CoA + H(+). Its pathway is amino-acid biosynthesis; L-leucine biosynthesis; L-leucine from 3-methyl-2-oxobutanoate: step 1/4. Functionally, catalyzes the condensation of the acetyl group of acetyl-CoA with 3-methyl-2-oxobutanoate (2-ketoisovalerate) to form 3-carboxy-3-hydroxy-4-methylpentanoate (2-isopropylmalate). In Campylobacter jejuni (strain RM1221), this protein is 2-isopropylmalate synthase.